A 455-amino-acid chain; its full sequence is Phosphoglucosamine/phosphogalactosamine mutase (455 aa).

Catalysis depends on Ser97, which acts as the Phosphoserine intermediate. Residues Ser97, Asp241, Asp243, and Asp245 each contribute to the Mg(2+) site. Ser97 carries the post-translational modification Phosphoserine.

This sequence belongs to the phosphohexose mutase family. Mg(2+) serves as cofactor. In terms of processing, activated by phosphorylation.

The catalysed reaction is alpha-D-glucosamine 1-phosphate = D-glucosamine 6-phosphate. It catalyses the reaction D-galactosamine 6-phosphate = alpha-D-galactosamine 1-phosphate. Its function is as follows. Involved in the synthesis of UDP-N-acetylglucosamine (UDP-GlcNAc) and UDP-N-acetylgalactosamine (UDP-GalNAc). Catalyzes the conversion of glucosamine-6-phosphate to glucosamine-1-phosphate and of galactosamine-6-phosphate to galactosamine-1-phosphate. This chain is Phosphoglucosamine/phosphogalactosamine mutase, found in Sulfurisphaera tokodaii (strain DSM 16993 / JCM 10545 / NBRC 100140 / 7) (Sulfolobus tokodaii).